Reading from the N-terminus, the 349-residue chain is Protein-glutamate methylesterase/protein-glutamine glutaminase (349 aa).

Positions 5–122 (RVLSVDDSAL…REGMLAYSEM (118 aa)) constitute a Response regulatory domain. A 4-aspartylphosphate modification is found at Asp56. The region spanning 152-344 (LLSSEKLIAI…QQMLAKISAG (193 aa)) is the CheB-type methylesterase domain. Catalysis depends on residues Ser164, His190, and Asp286.

It belongs to the CheB family. Phosphorylated by CheA. Phosphorylation of the N-terminal regulatory domain activates the methylesterase activity.

Its subcellular location is the cytoplasm. It carries out the reaction [protein]-L-glutamate 5-O-methyl ester + H2O = L-glutamyl-[protein] + methanol + H(+). The enzyme catalyses L-glutaminyl-[protein] + H2O = L-glutamyl-[protein] + NH4(+). In terms of biological role, involved in chemotaxis. Part of a chemotaxis signal transduction system that modulates chemotaxis in response to various stimuli. Catalyzes the demethylation of specific methylglutamate residues introduced into the chemoreceptors (methyl-accepting chemotaxis proteins or MCP) by CheR. Also mediates the irreversible deamidation of specific glutamine residues to glutamic acid. This is Protein-glutamate methylesterase/protein-glutamine glutaminase from Salmonella paratyphi A (strain ATCC 9150 / SARB42).